Here is a 312-residue protein sequence, read N- to C-terminus: Protein dif-1 (312 aa).

Solcar repeat units follow at residues 2–93 (SDVL…GKWL), 102–193 (MTFI…LKKK), and 203–289 (LSPG…TLAA). Transmembrane regions (helical) follow at residues 5-25 (LLNF…GHPF), 69-89 (MAAP…GCAV), 104-124 (FIQN…VMVP), 172-192 (TLLR…YLKK), 209-229 (LMAG…ADVL), and 261-282 (LFKG…CFFG).

This sequence belongs to the mitochondrial carrier (TC 2.A.29) family.

Its subcellular location is the mitochondrion inner membrane. Functionally, seems to play a role in the maintenance of tissue differentiation in the developing embryo, but not for its initiation. This chain is Protein dif-1 (dif-1), found in Caenorhabditis elegans.